The chain runs to 555 residues: Natural resistance-associated macrophage protein 1 (555 aa).

Residues 1–63 (MSGSGPAMAS…STPGFSFRKL (63 aa)) lie on the Cytoplasmic side of the membrane. The helical transmembrane segment at 64-81 (WAFTGPGFLMSIAYLDPG) threads the bilayer. Residues 82–90 (NVESDLQCG) are Extracellular-facing. A helical transmembrane segment spans residues 91–110 (AVAGFKLLWVLLWATVLGLL). At 111–147 (CQRLAIRLGVVTGKDLAEICYLYYPRVPRVLLWLMME) the chain is on the cytoplasmic side. Residues 148–168 (IAIIGSDMQEVIGTAIAFSLL) traverse the membrane as a helical segment. Topologically, residues 169-172 (SAGR) are extracellular. Residues 173–192 (IPLWGGVLITITDTLFFLFL) traverse the membrane as a helical segment. Topologically, residues 193-201 (DKYGLRKLE) are cytoplasmic. The helical transmembrane segment at 202–222 (AFFGFLITIMALTFGYEYVMV) threads the bilayer. Residues 223-245 (RPAQTEVLKGIFLPYCPGCGREE) are Extracellular-facing. The helical transmembrane segment at 246–264 (LLQAVGIVGAIIMPHNIFL) threads the bilayer. Topologically, residues 265–292 (HSSLVKTRAIDRSKKEEVKEANMYFLTE) are cytoplasmic. The helical transmembrane segment at 293–312 (SCLALFVSFLINLFVMAVFG) threads the bilayer. Residues 313-354 (EAFYHQRNEDVHNKCVNSSVSRYASIFPINNETVSVDIYQGG) lie on the Extracellular side of the membrane. 2 N-linked (GlcNAc...) asparagine glycosylation sites follow: N329 and N343. The helical transmembrane segment at 355-374 (VILGCYFGAAALYIWAVGIL) threads the bilayer. Over 375 to 405 (AAGQSSTMTGTYAGQFVMEGFLQLRWSRFTR) the chain is Cytoplasmic. The chain crosses the membrane as a helical span at residues 406 to 423 (VLFTRSLAILPTLFVAAF). At 424-434 (RDVSQLTGMND) the chain is on the extracellular side. A helical transmembrane segment spans residues 435–455 (LLNVLQSILLPFAVLPVLTFT). At 456 to 471 (SLRPLMHDFANGLLGQ) the chain is on the cytoplasmic side. Residues 472–493 (VLMSLITGLVCAINVYFVVDFL) traverse the membrane as a helical segment. Over 494–501 (PTLRGLGY) the chain is Extracellular. A helical membrane pass occupies residues 502-521 (LIPLGLLLVAYVAFVTYLLW). At 522–555 (TCSIAHGARFLARGRYNRFSFDVTADVPGLAGPH) the chain is on the cytoplasmic side.

It belongs to the NRAMP family. As to expression, macrophages; spleen and thymus and at lower level in liver and lung.

The protein localises to the late endosome membrane. The protein resides in the lysosome membrane. It catalyses the reaction Zn(2+)(in) + H(+)(out) = Zn(2+)(out) + H(+)(in). The catalysed reaction is Fe(2+)(in) + H(+)(out) = Fe(2+)(out) + H(+)(in). The enzyme catalyses Mn(2+)(in) + H(+)(out) = Mn(2+)(out) + H(+)(in). In terms of biological role, macrophage-specific antiporter that fluxes metal ions in either direction against a proton gradient. Localized to late endosomal lysosomal membranes, delivers bivalent cations from the cytosol into these acidic compartments where they may directly affect antimicrobial activity. Involved in iron metabolism and host natural resistance to infection with intracellular parasites. Pathogen resistance involves sequestration of Fe(2+) and Mn(2+), cofactors of both prokaryotic and eukaryotic catalases and superoxide dismutases, not only to protect the macrophage against its own generation of reactive oxygen species, but to deny the cations to the pathogen for synthesis of its protective enzymes. The sequence is that of Natural resistance-associated macrophage protein 1 (SLC11A1) from Gallus gallus (Chicken).